We begin with the raw amino-acid sequence, 120 residues long: NADH-quinone oxidoreductase subunit A (120 aa).

Transmembrane regions (helical) follow at residues 10-30 (ILVF…MGWF), 65-85 (VAIL…WAVV), and 89-109 (IGWF…VGFI).

Belongs to the complex I subunit 3 family. NDH-1 is composed of 14 different subunits. Subunits NuoA, H, J, K, L, M, N constitute the membrane sector of the complex.

It is found in the cell inner membrane. The enzyme catalyses a quinone + NADH + 5 H(+)(in) = a quinol + NAD(+) + 4 H(+)(out). In terms of biological role, NDH-1 shuttles electrons from NADH, via FMN and iron-sulfur (Fe-S) centers, to quinones in the respiratory chain. The immediate electron acceptor for the enzyme in this species is believed to be ubiquinone. Couples the redox reaction to proton translocation (for every two electrons transferred, four hydrogen ions are translocated across the cytoplasmic membrane), and thus conserves the redox energy in a proton gradient. The polypeptide is NADH-quinone oxidoreductase subunit A (Coxiella burnetii (strain Dugway 5J108-111)).